The sequence spans 280 residues: MRMKETLTEIFQNKIVDILLVAVILWIGVFIINRLVQLFFKRTDFIEEKKEKTIESLVRSVTQYTATIGFIFYVISLFVHDFGKILAGAGVAGIVIGFGAQSLIKDVLAGVFLIYERQLHKGDYVTVNNLFNGTVEEIGLRSLQIREWSGKLLTISNGEVRQIENYNIDFMRITESFLISFKEDPDRVYSVLEEACDMLNEELRDSLKRDEFGNPTEPFQIHGITALNKINRGVEFTVKGMVKDDDYFSASLAVRRVLVRQLYQNNVQMLEEAVRIERTQ.

3 helical membrane-spanning segments follow: residues 15-35 (IVDI…INRL), 68-88 (IGFI…ILAG), and 94-114 (IVIG…VFLI).

It belongs to the MscS (TC 1.A.23) family.

The protein localises to the cell membrane. Its function is as follows. May play a role in resistance to osmotic downshock. This is an uncharacterized protein from Bacillus subtilis (strain 168).